Here is a 401-residue protein sequence, read N- to C-terminus: Exodeoxyribonuclease 7 large subunit (401 aa).

It belongs to the XseA family. In terms of assembly, heterooligomer composed of large and small subunits.

It localises to the cytoplasm. The enzyme catalyses Exonucleolytic cleavage in either 5'- to 3'- or 3'- to 5'-direction to yield nucleoside 5'-phosphates.. Its function is as follows. Bidirectionally degrades single-stranded DNA into large acid-insoluble oligonucleotides, which are then degraded further into small acid-soluble oligonucleotides. This chain is Exodeoxyribonuclease 7 large subunit, found in Clostridium botulinum (strain Langeland / NCTC 10281 / Type F).